Consider the following 254-residue polypeptide: Probable phosphomannomutase (254 aa).

Asp-14 (nucleophile) is an active-site residue. Positions 14 and 16 each coordinate Mg(2+). The active-site Proton donor/acceptor is Asp-16. 6 residues coordinate alpha-D-mannose 1-phosphate: Arg-23, Arg-129, Arg-140, Arg-147, Ser-185, and Asp-187. Residues Asp-214, Phe-226, Asp-228, and Thr-231 each coordinate Mg(2+).

This sequence belongs to the eukaryotic PMM family. As to quaternary structure, homodimer.

It localises to the cytoplasm. The catalysed reaction is alpha-D-mannose 1-phosphate = D-mannose 6-phosphate. The protein operates within nucleotide-sugar biosynthesis; GDP-alpha-D-mannose biosynthesis; alpha-D-mannose 1-phosphate from D-fructose 6-phosphate: step 2/2. Its function is as follows. Involved in the synthesis of the GDP-mannose and dolichol-phosphate-mannose required for a number of critical mannosyl transfer reactions. In Caenorhabditis elegans, this protein is Probable phosphomannomutase.